The sequence spans 229 residues: Uracil-DNA glycosylase (229 aa).

The active-site Proton acceptor is D65.

This sequence belongs to the uracil-DNA glycosylase (UDG) superfamily. UNG family.

The protein localises to the cytoplasm. It carries out the reaction Hydrolyzes single-stranded DNA or mismatched double-stranded DNA and polynucleotides, releasing free uracil.. Excises uracil residues from the DNA which can arise as a result of misincorporation of dUMP residues by DNA polymerase or due to deamination of cytosine. The polypeptide is Uracil-DNA glycosylase (Brevibacillus brevis (strain 47 / JCM 6285 / NBRC 100599)).